Consider the following 261-residue polypeptide: Hemin import ATP-binding protein HmuV (261 aa).

Residues 7 to 243 (LRGQNLSLQF…EIIDAVYGYK (237 aa)) enclose the ABC transporter domain. 39–46 (GPNGAGKS) provides a ligand contact to ATP.

The protein belongs to the ABC transporter superfamily. Heme (hemin) importer (TC 3.A.1.14.5) family. In terms of assembly, the complex is composed of two ATP-binding proteins (HmuV), two transmembrane proteins (HmuU) and a solute-binding protein (HmuT).

It localises to the cell inner membrane. Functionally, part of the ABC transporter complex HmuTUV involved in hemin import. Responsible for energy coupling to the transport system. The sequence is that of Hemin import ATP-binding protein HmuV from Vibrio vulnificus (strain YJ016).